The sequence spans 91 residues: Probable Thioredoxin (91 aa).

The region spanning 1–91 is the Glutaredoxin domain; the sequence is MVMMKLFTSP…LKGGEEYGAS (91 aa). Cys12 and Cys15 are oxidised to a cystine.

This sequence belongs to the glutaredoxin family.

The protein localises to the cytoplasm. In terms of biological role, acts to maintain redox homeostasis; functions as a protein disulfide reductase. The chain is Probable Thioredoxin from Archaeoglobus fulgidus (strain ATCC 49558 / DSM 4304 / JCM 9628 / NBRC 100126 / VC-16).